The chain runs to 257 residues: UPF0246 protein KPK_4750 (257 aa).

It belongs to the UPF0246 family.

The polypeptide is UPF0246 protein KPK_4750 (Klebsiella pneumoniae (strain 342)).